Reading from the N-terminus, the 776-residue chain is Protein SEY1 (776 aa).

Over 1 to 681 (MADRPAIQLI…KRSIITTRTH (681 aa)) the chain is Cytoplasmic. A GB1/RHD3-type G domain is found at 34-263 (GLDYHVISVF…TENYYFKPQY (230 aa)). GTP is bound at residue 44–51 (GSQSSGKS). The helical transmembrane segment at 682 to 702 (IPPWIYVLLAVLGWNEFVAVI) threads the bilayer. The Lumenal portion of the chain corresponds to 703–705 (RNP). The chain crosses the membrane as a helical span at residues 706–726 (LFVTLTLILGATFFVIHKFGL). Residues 727–776 (WGPVVNVVQSAVGETRTAIKDKLRQFVVEDHEVKESFEMKDFSKNEQKEK) lie on the Cytoplasmic side of the membrane.

It belongs to the TRAFAC class dynamin-like GTPase superfamily. GB1/RHD3 GTPase family. RHD3 subfamily. As to quaternary structure, interacts with RTN1 and YOP1; GTP binding is not required for these interactions.

It is found in the endoplasmic reticulum membrane. Cooperates with the reticulon proteins RTN1 and RTN2 and the tubule-shaping DP1 family protein YOP1 to generate and maintain the structure of the tubular endoplasmic reticulum network. Has GTPase activity, which is required for its function in ER organization. The sequence is that of Protein SEY1 from Saccharomyces cerevisiae (strain ATCC 204508 / S288c) (Baker's yeast).